Reading from the N-terminus, the 96-residue chain is MSSISLNVLDDSVLIKPISEEKQGGIVLPSSAEKKPTKGEVIAIGEGSRNSSGERVTLTVKAGDKVFYRQWAGTEIEHNDEKLIVMKESDILAVIK.

It belongs to the GroES chaperonin family. Heptamer of 7 subunits arranged in a ring. Interacts with the chaperonin GroEL.

The protein resides in the cytoplasm. Functionally, together with the chaperonin GroEL, plays an essential role in assisting protein folding. The GroEL-GroES system forms a nano-cage that allows encapsulation of the non-native substrate proteins and provides a physical environment optimized to promote and accelerate protein folding. GroES binds to the apical surface of the GroEL ring, thereby capping the opening of the GroEL channel. The protein is Co-chaperonin GroES of Wolbachia sp. subsp. Drosophila simulans (strain wRi).